The chain runs to 1403 residues: E3 ubiquitin-protein ligase SNT2 (1403 aa).

The disordered stretch occupies residues 40-62 (SGAKTKGSNSQTPRNCKRTSNPA). Positions 45 to 62 (KGSNSQTPRNCKRTSNPA) are enriched in polar residues. The 138-residue stretch at 121 to 258 (VLLSANDTIY…RYTLKYYKVY (138 aa)) folds into the BAH domain. The PHD-type 1 zinc-finger motif lies at 317-369 (DKRCQFCKEWCIQKESLSCDECGVCAHLYCMDPPLDRKPNKDVVWTCFSCLQK). An SANT domain is found at 555–606 (LKEPSFTAVEIRKFEEAVEKFGSELRPVCEYVGTQPMSMIVRFYYNWKKTER). The PHD-type 2 zinc finger occupies 1038–1097 (RTFCSVCKEKFNDNDNYEVVCGNCGLTVHYFCYAIKLPKDMKKNTNLKTFKWLCDPCSND). Residues 1041 to 1095 (CSVCKEKFNDNDNYEVVCGNCGLTVHYFCYAIKLPKDMKKNTNLKTFKWLCDPCS) form an RING-type; degenerate zinc finger. The C2HC pre-PHD-type zinc finger occupies 1105–1153 (TYQCSMCPTKDYDYDRYRSQSFKICPDALKCTSLGTWVHLVCSLFNEDI). A PHD-type 3; degenerate zinc finger spans residues 1177–1231 (FTCGVCRINGGGLVKCNKCQYRYHITCAQNSSNFKLMFEKKNMSVDTTLPCIKDV).

As to quaternary structure, component of the Snt2C complex composed of SNT2, ECM5 and RPD3. Interacts with the E2 ubiquitin-conjugating enzyme UBC4 and histones H3 and H4. Binding is enhanced to methylated histone H3K36me3.

It is found in the cytoplasm. It localises to the nucleus. It carries out the reaction S-ubiquitinyl-[E2 ubiquitin-conjugating enzyme]-L-cysteine + [acceptor protein]-L-lysine = [E2 ubiquitin-conjugating enzyme]-L-cysteine + N(6)-ubiquitinyl-[acceptor protein]-L-lysine.. In terms of biological role, transcriptional regulator that, together with ECM5, recruits histone deacetylase RPD3 to a small number of promoters of stress-response genes in response to oxidative stress. Probable ubiquitin-protein ligase involved in the degradation-related ubiquitination of histones. Contributes to the post-translational regulation of histone protein levels by polyubiquitination of excess histones for subsequent degradation. This is E3 ubiquitin-protein ligase SNT2 from Saccharomyces cerevisiae (strain ATCC 204508 / S288c) (Baker's yeast).